Consider the following 154-residue polypeptide: Universal stress protein Sll1388 (154 aa).

This sequence belongs to the universal stress protein A family.

This is Universal stress protein Sll1388 from Synechocystis sp. (strain ATCC 27184 / PCC 6803 / Kazusa).